We begin with the raw amino-acid sequence, 179 residues long: Adenine phosphoribosyltransferase (179 aa).

Belongs to the purine/pyrimidine phosphoribosyltransferase family. In terms of assembly, homodimer.

The protein resides in the cytoplasm. The catalysed reaction is AMP + diphosphate = 5-phospho-alpha-D-ribose 1-diphosphate + adenine. It participates in purine metabolism; AMP biosynthesis via salvage pathway; AMP from adenine: step 1/1. In terms of biological role, catalyzes a salvage reaction resulting in the formation of AMP, that is energically less costly than de novo synthesis. The polypeptide is Adenine phosphoribosyltransferase (Dinoroseobacter shibae (strain DSM 16493 / NCIMB 14021 / DFL 12)).